Reading from the N-terminus, the 129-residue chain is D-ribose pyranase (129 aa).

His20 (proton donor) is an active-site residue. Substrate-binding positions include Asp28, His96, and 118–120 (YAN).

It belongs to the RbsD / FucU family. RbsD subfamily. As to quaternary structure, homodecamer.

It is found in the cytoplasm. The catalysed reaction is beta-D-ribopyranose = beta-D-ribofuranose. It functions in the pathway carbohydrate metabolism; D-ribose degradation; D-ribose 5-phosphate from beta-D-ribopyranose: step 1/2. Catalyzes the interconversion of beta-pyran and beta-furan forms of D-ribose. The polypeptide is D-ribose pyranase (Staphylococcus saprophyticus subsp. saprophyticus (strain ATCC 15305 / DSM 20229 / NCIMB 8711 / NCTC 7292 / S-41)).